Consider the following 141-residue polypeptide: Hemoglobin subunit alpha (141 aa).

The region spanning 1–141 is the Globin domain; sequence VLSGTDKTNV…VGLVLTAKYR (141 aa). His58 is an O2 binding site. His87 is a binding site for heme b.

Belongs to the globin family. Heterotetramer of two alpha chains and two beta chains. In terms of tissue distribution, red blood cells.

In terms of biological role, involved in oxygen transport from the lung to the various peripheral tissues. The protein is Hemoglobin subunit alpha (HBA) of Psittacula krameri (Rose-ringed parakeet).